Here is a 160-residue protein sequence, read N- to C-terminus: Nascent polypeptide-associated complex subunit alpha (160 aa).

An NAC-A/B domain is found at 10-75; the sequence is TKGEKKTREA…HSFDDIASRL (66 aa). Residues 120 to 159 enclose the UBA domain; it reads VNPKDVEVVMKETKASREKVVETLIATKNDLVSAVLELTT.

It belongs to the NAC-alpha family. Part of the nascent polypeptide-associated complex (NAC), consisting of nacA and nacB.

Its subcellular location is the cytoplasm. It localises to the nucleus. Its function is as follows. Component of the nascent polypeptide-associated complex (NAC), a dynamic component of the ribosomal exit tunnel, protecting the emerging polypeptides from interaction with other cytoplasmic proteins to ensure appropriate nascent protein targeting. The NAC complex also promotes mitochondrial protein import by enhancing productive ribosome interactions with the outer mitochondrial membrane and blocks the inappropriate interaction of ribosomes translating non-secretory nascent polypeptides with translocation sites in the membrane of the endoplasmic reticulum. May also be involved in transcription regulation. In Dictyostelium discoideum (Social amoeba), this protein is Nascent polypeptide-associated complex subunit alpha (nacA).